The chain runs to 554 residues: MTPLIFVTGGVVSSLGKGIAAASLASILEARGLKVTMMKLDPYINVDPGTMSPFQHGEVYVTDDGAETDLDLGHYERYVRTRLSRKNSVTTGRIYENVIRKERRGDYLGATVQVIPHITDEIRRCIDEATAGFDVALIEIGGTVGDIESLPFLEAIRQVRTERGAEKAMFMHLTLVPYIAAAGELKTKPTQHSVKELRSIGIQPDVLLCRSEQAVPDSERRKIALFTNVSERAVISCPDIDVLYGMPLELRRQGLDELVIDQFKLRDKVATADLSEWEAVVDAVKHPLDEVTIAVVGKYVDHQDAYKSVAEALKHGGLRQRTKVNLTWLEAQDLEGSDMAALQGIDGILVPGGFGDRGFEGKVQTSKYAREHKVPYFGICYGMQAAVVDYARHVADLDAANSTENDRQSPHPVIGLITEWRTATGEVEKRDEKSDLGGTMRLGLQEQRLKPGTLAREVYGKDVVAERHRHRYEFNNRYRTQLEDAGLVISGKSMDDTLVEMVELPRDTHPWFLACQAHPEFLSTPRDGHPLFIGFVRAAREKKAGGKLLKEARA.

The amidoligase domain stretch occupies residues 1–265 (MTPLIFVTGG…DELVIDQFKL (265 aa)). Residue S13 participates in CTP binding. S13 is a binding site for UTP. ATP is bound by residues 14–19 (SLGKGI) and D71. Mg(2+)-binding residues include D71 and E139. CTP-binding positions include 146-148 (DIE), 186-191 (KTKPTQ), and K222. Residues 186–191 (KTKPTQ) and K222 contribute to the UTP site. Residues 292–545 (TIAVVGKYVD…VRAAREKKAG (254 aa)) form the Glutamine amidotransferase type-1 domain. G353 contacts L-glutamine. The Nucleophile; for glutamine hydrolysis role is filled by C380. L-glutamine is bound by residues 381–384 (YGMQ), E404, and R471. Active-site residues include H518 and E520.

This sequence belongs to the CTP synthase family. In terms of assembly, homotetramer.

The enzyme catalyses UTP + L-glutamine + ATP + H2O = CTP + L-glutamate + ADP + phosphate + 2 H(+). It catalyses the reaction L-glutamine + H2O = L-glutamate + NH4(+). It carries out the reaction UTP + NH4(+) + ATP = CTP + ADP + phosphate + 2 H(+). It participates in pyrimidine metabolism; CTP biosynthesis via de novo pathway; CTP from UDP: step 2/2. With respect to regulation, allosterically activated by GTP, when glutamine is the substrate; GTP has no effect on the reaction when ammonia is the substrate. The allosteric effector GTP functions by stabilizing the protein conformation that binds the tetrahedral intermediate(s) formed during glutamine hydrolysis. Inhibited by the product CTP, via allosteric rather than competitive inhibition. In terms of biological role, catalyzes the ATP-dependent amination of UTP to CTP with either L-glutamine or ammonia as the source of nitrogen. Regulates intracellular CTP levels through interactions with the four ribonucleotide triphosphates. The protein is CTP synthase of Xanthomonas campestris pv. campestris (strain B100).